A 2269-amino-acid polypeptide reads, in one-letter code: Neuron navigator 3 (2269 aa).

The Calponin-homology (CH) domain occupies 55–162; sequence SKICKIYTDW…LFFILSRYKQ (108 aa). A compositionally biased stretch (polar residues) spans 186–207; that stretch reads TGAAQLSQHKTQDMQSSLTARY. 2 disordered regions span residues 186 to 358 and 388 to 532; these read TGAA…RSML and SEFG…NKGS. Low complexity predominate over residues 236–252; that stretch reads GSGSNSSKGSSNLNRRS. Polar residues-rich tracts occupy residues 267 to 291 and 305 to 319; these read ASGN…QQLA and SKSM…SSML. Residues 323-333 are compositionally biased toward pro residues; that stretch reads PPSPTSSPTPP. A compositionally biased stretch (polar residues) spans 346-356; sequence ASKSAPGNQRS. Over residues 411-432 the composition is skewed to low complexity; the sequence is PSASAFAPPSKSNNCKNHNNKS. The segment covering 505-518 has biased composition (polar residues); that stretch reads TATSKPAGTQSCVP. Residues 644–672 adopt a coiled-coil conformation; sequence ETRRMRTVKNIADLRQNLEETMSSLRGTQ. Disordered regions lie at residues 692-737, 756-776, 836-1036, 1050-1079, 1097-1412, and 1461-1487; these read GRGL…STTV, ASGA…VGPE, VKEM…IPGP, SGSA…TSLD, VPLQ…GTTC, and GGSA…TDEV. Polar residues-rich tracts occupy residues 699–716 and 727–737; these read SSRS…SSPR and PPRSSAGSTTV. Positions 847–860 are enriched in low complexity; the sequence is DSSSVSSGLSDTLD. Residues 874–886 show a composition bias toward polar residues; sequence GISSRKSKAAQSN. Positions 919–932 are enriched in low complexity; it reads PSCKWKTSSPSSSC. Residues 939 to 950 are compositionally biased toward polar residues; it reads QKTGLPMSQTGS. Residues 977–989 show a composition bias toward basic and acidic residues; it reads GKTDDAKASEKGK. Residues 1110 to 1137 are compositionally biased toward low complexity; sequence SSSGGSSVVSRSGHRSSSSSIDSNVSGK. Polar residues predominate over residues 1163-1172; that stretch reads GRSSPVTINQ. Low complexity-rich tracts occupy residues 1185–1202 and 1223–1234; these read GTGL…TQSG and GSKASSKPSSPG. Residues 1266–1276 show a composition bias toward gly residues; that stretch reads GSLGSMGGQSG. The span at 1292 to 1305 shows a compositional bias: low complexity; that stretch reads SPASSPASGLSLPS. Composition is skewed to polar residues over residues 1313–1339 and 1354–1363; these read NLSS…SSES and RTGSVKSTLS. Basic and acidic residues predominate over residues 1381 to 1391; that stretch reads TSHEEGKEWLR. Over residues 1392 to 1412 the composition is skewed to polar residues; that stretch reads SHSTGGLQDTGSPLSPPGTTC. A coiled-coil region spans residues 1499 to 1586; sequence SSLYSAQIRK…TDAQTAIQVA (88 aa). Disordered stretches follow at residues 1602-1672, 1756-1792, and 2207-2269; these read QHSS…PSSP, NDRL…SRQS, and GYSS…ESAL. Composition is skewed to low complexity over residues 1605–1623 and 1765–1792; these read SESM…LGSA and TTPA…SRQS. The stretch at 1697–1765 forms a coiled coil; it reads CECTEAEAEI…NDRLKSSGNT (69 aa). The span at 2208-2224 shows a compositional bias: polar residues; that stretch reads YSSSKDGAASKQVSQSD.

Belongs to the Nav/unc-53 family. As to quaternary structure, interacts with F-actin.

The protein resides in the nucleus outer membrane. The protein localises to the golgi apparatus. It localises to the cell projection. It is found in the lamellipodium. Its subcellular location is the filopodium. Involved in liver and heart organogenesis during embryo development. Plays a role in the migration of hepatoblasts from the intestinal endoderm during liver organogenesis; possibly by modulating actin polymerization during hepatoblast outgrowth. May be involved in neuron regeneration. The protein is Neuron navigator 3 (nav3) of Danio rerio (Zebrafish).